Here is an 88-residue protein sequence, read N- to C-terminus: Small ribosomal subunit protein uS15c (88 aa).

It belongs to the universal ribosomal protein uS15 family. In terms of assembly, part of the 30S ribosomal subunit.

The protein resides in the plastid. Its subcellular location is the chloroplast. The protein is Small ribosomal subunit protein uS15c (rps15) of Angiopteris evecta (Mule's foot fern).